Consider the following 261-residue polypeptide: Cytochrome c oxidase subunit 3 (261 aa).

The Mitochondrial matrix portion of the chain corresponds to M1–P15. A helical membrane pass occupies residues W16–W34. Residues F35–M40 lie on the Mitochondrial intermembrane side of the membrane. Residues I41 to T66 traverse the membrane as a helical segment. The Mitochondrial matrix segment spans residues F67–T72. The helical transmembrane segment at P73–S105 threads the bilayer. Residues L106–E128 lie on the Mitochondrial intermembrane side of the membrane. Residues V129–M152 traverse the membrane as a helical segment. The Mitochondrial matrix segment spans residues E153–N155. A helical transmembrane segment spans residues R156–E183. Residues A184–D190 lie on the Mitochondrial intermembrane side of the membrane. A helical membrane pass occupies residues G191–V223. The Mitochondrial matrix segment spans residues K224–H232. Residues F233–I256 traverse the membrane as a helical segment. Residues Y257–S261 lie on the Mitochondrial intermembrane side of the membrane.

This sequence belongs to the cytochrome c oxidase subunit 3 family. In terms of assembly, component of the cytochrome c oxidase (complex IV, CIV), a multisubunit enzyme composed of 14 subunits. The complex is composed of a catalytic core of 3 subunits MT-CO1, MT-CO2 and MT-CO3, encoded in the mitochondrial DNA, and 11 supernumerary subunits COX4I, COX5A, COX5B, COX6A, COX6B, COX6C, COX7A, COX7B, COX7C, COX8 and NDUFA4, which are encoded in the nuclear genome. The complex exists as a monomer or a dimer and forms supercomplexes (SCs) in the inner mitochondrial membrane with NADH-ubiquinone oxidoreductase (complex I, CI) and ubiquinol-cytochrome c oxidoreductase (cytochrome b-c1 complex, complex III, CIII), resulting in different assemblies (supercomplex SCI(1)III(2)IV(1) and megacomplex MCI(2)III(2)IV(2)).

Its subcellular location is the mitochondrion inner membrane. The catalysed reaction is 4 Fe(II)-[cytochrome c] + O2 + 8 H(+)(in) = 4 Fe(III)-[cytochrome c] + 2 H2O + 4 H(+)(out). Component of the cytochrome c oxidase, the last enzyme in the mitochondrial electron transport chain which drives oxidative phosphorylation. The respiratory chain contains 3 multisubunit complexes succinate dehydrogenase (complex II, CII), ubiquinol-cytochrome c oxidoreductase (cytochrome b-c1 complex, complex III, CIII) and cytochrome c oxidase (complex IV, CIV), that cooperate to transfer electrons derived from NADH and succinate to molecular oxygen, creating an electrochemical gradient over the inner membrane that drives transmembrane transport and the ATP synthase. Cytochrome c oxidase is the component of the respiratory chain that catalyzes the reduction of oxygen to water. Electrons originating from reduced cytochrome c in the intermembrane space (IMS) are transferred via the dinuclear copper A center (CU(A)) of subunit 2 and heme A of subunit 1 to the active site in subunit 1, a binuclear center (BNC) formed by heme A3 and copper B (CU(B)). The BNC reduces molecular oxygen to 2 water molecules using 4 electrons from cytochrome c in the IMS and 4 protons from the mitochondrial matrix. This chain is Cytochrome c oxidase subunit 3 (MT-CO3), found in Balaenoptera musculus (Blue whale).